We begin with the raw amino-acid sequence, 223 residues long: Interleukin-12 subunit alpha (223 aa).

Positions 1-23 (MCPSARSLLLLASLVLLEHLGSA) are cleaved as a signal peptide. Asparagine 41, asparagine 79, asparagine 121, and asparagine 176 each carry an N-linked (GlcNAc...) asparagine glycan. 2 disulfides stabilise this stretch: cysteine 66/cysteine 200 and cysteine 87/cysteine 125.

This sequence belongs to the IL-6 superfamily. As to quaternary structure, heterodimer with IL12B; disulfide-linked. This heterodimer is known as interleukin IL-12. Heterodimer with EBI3/IL27B; not disulfide-linked. This heterodimer is known as interleukin IL-35. Interacts with NBR1; this interaction promotes IL-12 secretion.

It is found in the secreted. Functionally, heterodimerizes with IL12B to form the IL-12 cytokine or with EBI3/IL27B to form the IL-35 cytokine. IL-12 is primarily produced by professional antigen-presenting cells (APCs) such as B-cells and dendritic cells (DCs) as well as macrophages and granulocytes and regulates T-cell and natural killer-cell responses, induces the production of interferon-gamma (IFN-gamma), favors the differentiation of T-helper 1 (Th1) cells and is an important link between innate resistance and adaptive immunity. Mechanistically, exerts its biological effects through a receptor composed of IL12R1 and IL12R2 subunits. Binding to the receptor results in the rapid tyrosine phosphorylation of a number of cellular substrates including the JAK family kinases TYK2 and JAK2. In turn, recruited STAT4 gets phosphorylated and translocates to the nucleus where it regulates cytokine/growth factor responsive genes. As part of IL-35, plays essential roles in maintaining the immune homeostasis of the liver microenvironment and also functions as an immune-suppressive cytokine. Mediates biological events through unconventional receptors composed of IL12RB2 and gp130/IL6ST heterodimers or homodimers. Signaling requires the transcription factors STAT1 and STAT4, which form a unique heterodimer that binds to distinct DNA sites. The polypeptide is Interleukin-12 subunit alpha (IL12A) (Marmota monax (Woodchuck)).